The following is a 301-amino-acid chain: ATP synthase gamma chain (301 aa).

It belongs to the ATPase gamma chain family. F-type ATPases have 2 components, CF(1) - the catalytic core - and CF(0) - the membrane proton channel. CF(1) has five subunits: alpha(3), beta(3), gamma(1), delta(1), epsilon(1). CF(0) has three main subunits: a, b and c.

The protein localises to the cell inner membrane. Functionally, produces ATP from ADP in the presence of a proton gradient across the membrane. The gamma chain is believed to be important in regulating ATPase activity and the flow of protons through the CF(0) complex. This chain is ATP synthase gamma chain, found in Helicobacter acinonychis (strain Sheeba).